The chain runs to 243 residues: DUF724 domain-containing protein 5 (243 aa).

Residues 1–24 show a composition bias toward basic and acidic residues; it reads MREKHYSEDNSRKRKRGELEHNSD. The disordered stretch occupies residues 1–51; that stretch reads MREKHYSEDNSRKRKRGELEHNSDLNETVLPSDWTPDPVKNFAADDDDEET. The region spanning 59-243 is the DUF724 domain; sequence VLPFVKKSPV…DLGVELEDVE (185 aa). The stretch at 174–223 forms a coiled coil; the sequence is KEMKDESSKKHKAEQEFGEMERKILEVKNKVLELQKQEAALEKQKDATYE.

In terms of assembly, homodimer. As to expression, expressed in leaves, flowers and siliques.

The protein localises to the nucleus. Functionally, may be involved in the polar growth of plant cells via transportation of RNAs. In Arabidopsis thaliana (Mouse-ear cress), this protein is DUF724 domain-containing protein 5.